The chain runs to 90 residues: DNA-binding protein HU (90 aa).

Thr-4 bears the Phosphothreonine mark. Residues 56–90 form a disordered region; sequence AARKGRNPQTGEEMEIPASKVPAFKPGKALKDAVK.

The protein belongs to the bacterial histone-like protein family. As to quaternary structure, homodimer.

Its function is as follows. Histone-like DNA-binding protein which is capable of wrapping DNA to stabilize it, and thus to prevent its denaturation under extreme environmental conditions. The sequence is that of DNA-binding protein HU (hup) from Geobacillus stearothermophilus (Bacillus stearothermophilus).